The following is a 457-amino-acid chain: Protein translocase subunit SecY (457 aa).

Topologically, residues 1 to 20 (MGVIDVLAAVGERFPAVRKP) are cytoplasmic. A helical membrane pass occupies residues 21-47 (ERKPTLYRRLAWTGVILVLYFIMSNIP). Over 48 to 59 (LYGIPPQNIGGQ) the chain is Extracellular. The helical intramembrane region spans 60-67 (VDLQRIIF). Residues 60–88 (VDLQRIIFASSAGTLMELGIGPIVTASLI) form a discontinuously helical membrane-spanning segment. An intramembrane segment occupies 68–79 (ASSAGTLMELGI). Residues 80–88 (GPIVTASLI) constitute an intramembrane region (helical). Over 89–109 (IQVLVGAKIIKLDLADPEGRR) the chain is Cytoplasmic. A helical membrane pass occupies residues 110–134 (KFTSAQKVLALAFAALEAVAFTVGG). At 135-146 (RYWVGTAIEPGP) the chain is on the extracellular side. Residues 147 to 171 (LDYALVSLQLFLGALLVIYFDEVMQ) form a helical membrane-spanning segment. Residues 172 to 178 (KGWGIGS) lie on the Cytoplasmic side of the membrane. Residues 179–197 (AISLFILAGVAQGVVWSIF) traverse the membrane as a helical segment. The Extracellular portion of the chain corresponds to 198–229 (GTIPGVAQDYGLVPAIISNPDLTLLARPNGFP). The helical transmembrane segment at 230 to 251 (DLTGFFTTLAAIILLVYLQAMR) threads the bilayer. The Cytoplasmic portion of the chain corresponds to 252 to 276 (VEIPITSERFKGIRSRVPLQFIYVT). The helical transmembrane segment at 277 to 298 (NIPILLVGILVSDLLLVQRLLA) threads the bilayer. Residues 299–332 (DYLGVESRAYQIYSSIVYYLSPPRGVVQSIADPV) lie on the Extracellular side of the membrane. Residues 333 to 352 (KTAVFIASWTVLSIVFGYMW) traverse the membrane as a helical segment. Residues 353 to 395 (VEIAGLNPREQAERLIKGGLAIPGMRSDPRVLERVLRRYIYPL) lie on the Cytoplasmic side of the membrane. The helical transmembrane segment at 396-414 (TFLSSLIVAALVIVADIFG) threads the bilayer. The Extracellular portion of the chain corresponds to 415–417 (AYG). A helical transmembrane segment spans residues 418–432 (TGTGLLLAVGIINQY). At 433-457 (YAMITRERALETYPLLRRILGEEVV) the chain is on the cytoplasmic side.

This sequence belongs to the SecY/SEC61-alpha family. In terms of assembly, component of the Sec protein translocase complex. Heterotrimer consisting of alpha (SecY), beta (SecG) and gamma (SecE) subunits. The heterotrimers can form oligomers, although 1 heterotrimer is thought to be able to translocate proteins. Interacts with the ribosome. May interact with SecDF, and other proteins may be involved.

The protein localises to the cell membrane. In terms of biological role, the central subunit of the protein translocation channel SecYEG. Consists of two halves formed by TMs 1-5 and 6-10. These two domains form a lateral gate at the front which open onto the bilayer between TMs 2 and 7, and are clamped together by SecE at the back. The channel is closed by both a pore ring composed of hydrophobic SecY resides and a short helix (helix 2A) on the extracellular side of the membrane which forms a plug. The plug probably moves laterally to allow the channel to open. The ring and the pore may move independently. This chain is Protein translocase subunit SecY, found in Aeropyrum pernix (strain ATCC 700893 / DSM 11879 / JCM 9820 / NBRC 100138 / K1).